The primary structure comprises 263 residues: MPEGPEIRRAADNLEAAIKGKPLTDVWFAFPQLKTYQSQLIGQHVTHVETRGKALLTHFPNGLTLYSHNQLYGVWRVVDTGEEPQTTRVLRVKLQTADKTILLYSASDIEMLRPEQLTTHPFLQRVGPDVLDPNLTPEVVKERLLSPRFRNRQFAGLLLDQAFLAGLGNYLRVEILWQVGLTGNHKAKDLNAAQLDALAHALLEIPRFSYATRGQVDENKHHGALFRFKVFHRDGELCERCGGIIEKTTLSSRPFYWCPGCQH.

The active-site Schiff-base intermediate with DNA is the Pro-2. Glu-3 (proton donor) is an active-site residue. Lys-53 serves as the catalytic Proton donor; for beta-elimination activity. Residues Gln-70, Arg-125, and Asn-169 each coordinate DNA. Residues 229 to 263 form an FPG-type zinc finger; that stretch reads KVFHRDGELCERCGGIIEKTTLSSRPFYWCPGCQH. The Proton donor; for delta-elimination activity role is filled by Arg-253.

Belongs to the FPG family. Zn(2+) serves as cofactor.

It catalyses the reaction 2'-deoxyribonucleotide-(2'-deoxyribose 5'-phosphate)-2'-deoxyribonucleotide-DNA = a 3'-end 2'-deoxyribonucleotide-(2,3-dehydro-2,3-deoxyribose 5'-phosphate)-DNA + a 5'-end 5'-phospho-2'-deoxyribonucleoside-DNA + H(+). Functionally, involved in base excision repair of DNA damaged by oxidation or by mutagenic agents. Acts as a DNA glycosylase that recognizes and removes damaged bases. Has a preference for oxidized pyrimidines, such as thymine glycol, 5,6-dihydrouracil and 5,6-dihydrothymine. Has AP (apurinic/apyrimidinic) lyase activity and introduces nicks in the DNA strand. Cleaves the DNA backbone by beta-delta elimination to generate a single-strand break at the site of the removed base with both 3'- and 5'-phosphates. The polypeptide is Endonuclease 8 (Shigella flexneri serotype 5b (strain 8401)).